Reading from the N-terminus, the 541-residue chain is Chaperonin GroEL (541 aa).

ATP contacts are provided by residues 29 to 32 (TLGP), 86 to 90 (DGTTT), glycine 413, and aspartate 494.

Belongs to the chaperonin (HSP60) family. As to quaternary structure, forms a cylinder of 14 subunits composed of two heptameric rings stacked back-to-back. Interacts with the co-chaperonin GroES.

The protein resides in the cytoplasm. It catalyses the reaction ATP + H2O + a folded polypeptide = ADP + phosphate + an unfolded polypeptide.. In terms of biological role, together with its co-chaperonin GroES, plays an essential role in assisting protein folding. The GroEL-GroES system forms a nano-cage that allows encapsulation of the non-native substrate proteins and provides a physical environment optimized to promote and accelerate protein folding. The protein is Chaperonin GroEL of Acetivibrio thermocellus (strain ATCC 27405 / DSM 1237 / JCM 9322 / NBRC 103400 / NCIMB 10682 / NRRL B-4536 / VPI 7372) (Clostridium thermocellum).